The following is a 411-amino-acid chain: Methylthioribose-1-phosphate isomerase (411 aa).

Ser-2 carries the post-translational modification N-acetylserine. Asp-280 serves as the catalytic Proton donor. Position 351 is a phosphoserine (Ser-351).

It belongs to the eIF-2B alpha/beta/delta subunits family. MtnA subfamily. Homodimer.

The protein localises to the cytoplasm. Its subcellular location is the nucleus. It catalyses the reaction 5-(methylsulfanyl)-alpha-D-ribose 1-phosphate = 5-(methylsulfanyl)-D-ribulose 1-phosphate. It functions in the pathway amino-acid biosynthesis; L-methionine biosynthesis via salvage pathway; L-methionine from S-methyl-5-thio-alpha-D-ribose 1-phosphate: step 1/6. Catalyzes the interconversion of methylthioribose-1-phosphate (MTR-1-P) into methylthioribulose-1-phosphate (MTRu-1-P). This Saccharomyces cerevisiae (strain RM11-1a) (Baker's yeast) protein is Methylthioribose-1-phosphate isomerase.